Consider the following 263-residue polypeptide: Hydroxyethylthiazole kinase (263 aa).

Residue methionine 39 coordinates substrate. 2 residues coordinate ATP: lysine 115 and threonine 160. Glycine 187 is a substrate binding site.

Belongs to the Thz kinase family. Mg(2+) is required as a cofactor.

The enzyme catalyses 5-(2-hydroxyethyl)-4-methylthiazole + ATP = 4-methyl-5-(2-phosphooxyethyl)-thiazole + ADP + H(+). The protein operates within cofactor biosynthesis; thiamine diphosphate biosynthesis; 4-methyl-5-(2-phosphoethyl)-thiazole from 5-(2-hydroxyethyl)-4-methylthiazole: step 1/1. Catalyzes the phosphorylation of the hydroxyl group of 4-methyl-5-beta-hydroxyethylthiazole (THZ). The sequence is that of Hydroxyethylthiazole kinase from Staphylococcus aureus (strain bovine RF122 / ET3-1).